The primary structure comprises 239 residues: MAVVTLSEMMEAGAHFGHQTRRWNPKMSRYIYCARNGVHIIDLVKTAVCMNNAYKWTRSAARSGKRFLFVGTKKQASEVVALEAARCGAAYVNQRWLGGMLTNWTTMKARIDRLKDLERMESSGAIAMRPKKEGAVLRRELERLQKYLGGLKTMRRLPDVVVLVDQRRESNAVLEARKLDIPLVSMLDTNCDPDLCEVPIPCNDDAVRSVQLVLGRLADAINEGRHGSNEQRGGDDYEG.

It belongs to the universal ribosomal protein uS2 family.

The protein is Small ribosomal subunit protein uS2 of Synechococcus sp. (strain CC9902).